The primary structure comprises 1154 residues: Large proline-rich protein BAG6 (1154 aa).

Position 1 is an N-acetylmethionine (M1). Residues 17 to 92 enclose the Ubiquitin-like domain; it reads LEVLVKTLDS…HLVERAPPQT (76 aa). Disordered regions lie at residues 87–125, 186–274, 387–442, 463–531, and 568–626; these read RAPP…ASVH, RGGT…HPSP, TMTG…SSHP, QDSG…QGAG, and AQAQ…SAAD. S96 carries the post-translational modification Phosphoserine. Residues 96-112 show a composition bias toward low complexity; sequence SGASSGTGSASATHGGA. The residue at position 117 (T117) is a Phosphothreonine. The segment covering 209–218 has biased composition (polar residues); sequence VALNSQTSEP. Repeat unit 1 spans residues 237–271; sequence RPPTQTPELAPSGPAPAGPAPAGPAPAPETNAPNH. Residues 237–658 form a 4 X 29 AA approximate repeats region; the sequence is RPPTQTPELA…MASPTITVAM (422 aa). Residues 249–263 are compositionally biased toward pro residues; that stretch reads GPAPAGPAPAGPAPA. Residues 400–409 show a composition bias toward low complexity; sequence GAEAATPGSA. Residues 410–426 are compositionally biased toward polar residues; it reads QATSLPPSSTTVDSSTE. Repeat 2 spans residues 416–444; the sequence is PSSTTVDSSTEGAPPPGPAPPPASSHPRV. 2 stretches are compositionally biased toward pro residues: residues 428 to 439 and 508 to 521; these read APPPGPAPPPAS and PTPP…PGGP. Low complexity-rich tracts occupy residues 568–581 and 591–609; these read AQAQ…AQAP and PATA…TAGP. Tandem repeats lie at residues 597–624 and 630–658. Pro residues predominate over residues 611-622; the sequence is PGGPAQPPPPQP. Disordered stretches follow at residues 673–719 and 968–1154; these read QASQ…ESLP and PPQT…ADDP. Over residues 678 to 702 the composition is skewed to pro residues; that stretch reads APPPPPPPPPPPPAPEQQSTPPPGS. Phosphoserine is present on residues S986 and S995. Positions 1029–1042 are enriched in low complexity; that stretch reads AEPWAAAVPPEWVP. The interval 1032–1062 is required for interaction with GET4; it reads WAAAVPPEWVPIIQQDIQSQRKVKPQPPLSD. Residues 1034 to 1076 carry the Nuclear localization site motif; that stretch reads AAVPPEWVPIIQQDIQSQRKVKPQPPLSDAYLSGMPAKRRKTM. The tract at residues 1044 to 1154 is sufficient for the delivery of client proteins to the endoplasmic reticulum; sequence IQQDIQSQRK…NAHRAFADDP (111 aa). A Phosphothreonine modification is found at T1075. A BAG-similar domain, required and sufficient for interaction with UBL4A region spans residues 1080-1137; the sequence is GPQLLLSEAVSRAAKAAGARPLTSPESLSRDLEAPEVQESYRQQLRSDIQKRLQEDPN. Over residues 1088–1098 the composition is skewed to low complexity; it reads AVSRAAKAAGA. S1103 and S1139 each carry phosphoserine.

Component of the BAG6/BAT3 complex, also named BAT3 complex, at least composed of BAG6, UBL4A and GET4/TRC35. Interacts with GET4; the interaction is direct and localizes BAG6 in the cytosol. Interacts with UBL4A; the interaction is direct and required for UBL4A protein stability. Interacts with AIFM1. Interacts with HSPA2. Interacts with CTCFL. Interacts with p300/EP300. Interacts (via ubiquitin-like domain) with RNF126; required for BAG6-dependent ubiquitination of proteins mislocalized to the cytosol. Interacts (via ubiquitin-like domain) with SGTA; SGTA competes with RNF126 by binding the same region of BAG6, thereby promoting deubiquitination of BAG6-target proteins and rescuing them from degradation. Interacts with ricin A chain. Interacts with VCP and AMFR; both form the VCP/p97-AMFR/gp78 complex. Interacts with SYVN1. Interacts with USP13; the interaction is direct and may mediate UBL4A deubiquitination. Interacts with ZFAND2B. Interacts with KPNA2. Interacts with UBQLN4. Post-translationally, ricin can induce a cleavage by the caspase CASP3. The released C-terminal peptide induces apoptosis.

It localises to the cytoplasm. Its subcellular location is the cytosol. The protein resides in the nucleus. It is found in the secreted. The protein localises to the extracellular exosome. In terms of biological role, ATP-independent molecular chaperone preventing the aggregation of misfolded and hydrophobic patches-containing proteins. Functions as part of a cytosolic protein quality control complex, the BAG6/BAT3 complex, which maintains these client proteins in a soluble state and participates in their proper delivery to the endoplasmic reticulum or alternatively can promote their sorting to the proteasome where they undergo degradation. The BAG6/BAT3 complex is involved in the post-translational delivery of tail-anchored/type II transmembrane proteins to the endoplasmic reticulum membrane. Recruited to ribosomes, it interacts with the transmembrane region of newly synthesized tail-anchored proteins and together with SGTA and ASNA1 mediates their delivery to the endoplasmic reticulum. Client proteins that cannot be properly delivered to the endoplasmic reticulum are ubiquitinated by RNF126, an E3 ubiquitin-protein ligase associated with BAG6 and are sorted to the proteasome. SGTA which prevents the recruitment of RNF126 to BAG6 may negatively regulate the ubiquitination and the proteasomal degradation of client proteins. Similarly, the BAG6/BAT3 complex also functions as a sorting platform for proteins of the secretory pathway that are mislocalized to the cytosol either delivering them to the proteasome for degradation or to the endoplasmic reticulum. The BAG6/BAT3 complex also plays a role in the endoplasmic reticulum-associated degradation (ERAD), a quality control mechanism that eliminates unwanted proteins of the endoplasmic reticulum through their retrotranslocation to the cytosol and their targeting to the proteasome. It maintains these retrotranslocated proteins in an unfolded yet soluble state condition in the cytosol to ensure their proper delivery to the proteasome. BAG6 is also required for selective ubiquitin-mediated degradation of defective nascent chain polypeptides by the proteasome. In this context, it may participate in the production of antigenic peptides and play a role in antigen presentation in immune response. BAG6 is also involved in endoplasmic reticulum stress-induced pre-emptive quality control, a mechanism that selectively attenuates the translocation of newly synthesized proteins into the endoplasmic reticulum and reroutes them to the cytosol for proteasomal degradation. BAG6 may ensure the proper degradation of these proteins and thereby protects the endoplasmic reticulum from protein overload upon stress. By inhibiting the polyubiquitination and subsequent proteasomal degradation of HSPA2 it may also play a role in the assembly of the synaptonemal complex during spermatogenesis. Also positively regulates apoptosis by interacting with and stabilizing the proapoptotic factor AIFM1. By controlling the steady-state expression of the IGF1R receptor, indirectly regulates the insulin-like growth factor receptor signaling pathway. Its function is as follows. Involved in DNA damage-induced apoptosis: following DNA damage, accumulates in the nucleus and forms a complex with p300/EP300, enhancing p300/EP300-mediated p53/TP53 acetylation leading to increase p53/TP53 transcriptional activity. When nuclear, may also act as a component of some chromatin regulator complex that regulates histone 3 'Lys-4' dimethylation (H3K4me2). Released extracellularly via exosomes, it is a ligand of the natural killer/NK cells receptor NCR3 and stimulates NK cells cytotoxicity. It may thereby trigger NK cells cytotoxicity against neighboring tumor cells and immature myeloid dendritic cells (DC). Functionally, may mediate ricin-induced apoptosis. This chain is Large proline-rich protein BAG6, found in Mus musculus (Mouse).